A 226-amino-acid polypeptide reads, in one-letter code: Leucyl/phenylalanyl-tRNA--protein transferase (226 aa).

It belongs to the L/F-transferase family.

Its subcellular location is the cytoplasm. The enzyme catalyses N-terminal L-lysyl-[protein] + L-leucyl-tRNA(Leu) = N-terminal L-leucyl-L-lysyl-[protein] + tRNA(Leu) + H(+). It catalyses the reaction N-terminal L-arginyl-[protein] + L-leucyl-tRNA(Leu) = N-terminal L-leucyl-L-arginyl-[protein] + tRNA(Leu) + H(+). The catalysed reaction is L-phenylalanyl-tRNA(Phe) + an N-terminal L-alpha-aminoacyl-[protein] = an N-terminal L-phenylalanyl-L-alpha-aminoacyl-[protein] + tRNA(Phe). Functions in the N-end rule pathway of protein degradation where it conjugates Leu, Phe and, less efficiently, Met from aminoacyl-tRNAs to the N-termini of proteins containing an N-terminal arginine or lysine. This Pseudomonas paraeruginosa (strain DSM 24068 / PA7) (Pseudomonas aeruginosa (strain PA7)) protein is Leucyl/phenylalanyl-tRNA--protein transferase.